We begin with the raw amino-acid sequence, 456 residues long: Ribonuclease inhibitor (456 aa).

Met-1 carries the post-translational modification N-acetylmethionine. 15 LRR repeats span residues 15–43, 44–71, 72–100, 101–128, 129–157, 158–185, 186–214, 215–242, 243–271, 272–299, 300–328, 329–356, 357–385, 386–413, and 414–442; these read WTEL…CKDI, SSAV…VGLV, LQGL…CGIL, PGML…LKLL, CEGL…CEPL, ASVL…VRIL, CQGL…CKDL, CDVV…IAAL, CPGL…CKDL, CRVL…ARLL, CESL…CPYF, CSVL…VQEL, CKAL…CSSL, ANVL…VLQL, and LESL…EEQL. Ser-86 is subject to Phosphoserine.

As to quaternary structure, forms high-affinity heterodimers with RNASE1, ANG and RNASE2.

Its subcellular location is the cytoplasm. It localises to the nucleus. Its function is as follows. Ribonuclease inhibitor which inhibits RNASE1, RNASE2 and angiogenin (ANG). May play a role in redox homeostasis. Required to inhibit the cytotoxic tRNA ribonuclease activity of ANG in the cytoplasm in absence of stress. Relocates to the nucleus in response to stress, relieving inhibition of ANG in the cytoplasm, and inhibiting the angiogenic activity of ANG in the nucleus. This Mus musculus (Mouse) protein is Ribonuclease inhibitor (Rnh1).